Reading from the N-terminus, the 357-residue chain is 3-isopropylmalate dehydrogenase (357 aa).

Substrate is bound by residues Arg-97, Arg-107, Arg-135, and Asp-224. Mg(2+)-binding residues include Asp-224, Asp-248, and Asp-252. Position 282 to 294 (282 to 294) interacts with NAD(+); the sequence is GSAPDIAGQDKAN.

This sequence belongs to the isocitrate and isopropylmalate dehydrogenases family. LeuB type 1 subfamily. In terms of assembly, homodimer. Mg(2+) is required as a cofactor. The cofactor is Mn(2+).

It localises to the cytoplasm. It carries out the reaction (2R,3S)-3-isopropylmalate + NAD(+) = 4-methyl-2-oxopentanoate + CO2 + NADH. Its pathway is amino-acid biosynthesis; L-leucine biosynthesis; L-leucine from 3-methyl-2-oxobutanoate: step 3/4. Catalyzes the oxidation of 3-carboxy-2-hydroxy-4-methylpentanoate (3-isopropylmalate) to 3-carboxy-4-methyl-2-oxopentanoate. The product decarboxylates to 4-methyl-2 oxopentanoate. The sequence is that of 3-isopropylmalate dehydrogenase from Parasynechococcus marenigrum (strain WH8102).